Consider the following 361-residue polypeptide: MAGNSIGQFFRVTTFGESHGIALGCIIDGVPPGIPITEADIQLDLDRRRPGTSRYTTQRRELDQVRILSGVFEGVTTGTSIGLMIENTDQRSQDYSAIKDVFRPGHADYTYEQKYGVRDYRGGGRSSARETAMRVAAGAIAKKYLAQKFGVQVRGYLAQMGDVSCDLLDWDLVEQNPFFCPDASKLEPLDALMRELKKAGDSIGAKITVVAENVPVGLGEPVFDRLDADLAHALMSINAVKGVEIGDGFAVVTKRGSENRDEITPQGFQSNHAGGILGGISSGQPVVAHIALKPTSSIMVPGQTINRQGEAVEMVTRGRHDPCVGIRAVPIAEAMMAIVLMDHLLRQRAQCGDVASDVPRW.

Residues R48 and R54 each contribute to the NADP(+) site. FMN contacts are provided by residues 125-127 (RSS), 238-239 (NA), G278, 293-297 (KPTSS), and R319.

The protein belongs to the chorismate synthase family. As to quaternary structure, homotetramer. It depends on FMNH2 as a cofactor.

It catalyses the reaction 5-O-(1-carboxyvinyl)-3-phosphoshikimate = chorismate + phosphate. Its pathway is metabolic intermediate biosynthesis; chorismate biosynthesis; chorismate from D-erythrose 4-phosphate and phosphoenolpyruvate: step 7/7. Its function is as follows. Catalyzes the anti-1,4-elimination of the C-3 phosphate and the C-6 proR hydrogen from 5-enolpyruvylshikimate-3-phosphate (EPSP) to yield chorismate, which is the branch point compound that serves as the starting substrate for the three terminal pathways of aromatic amino acid biosynthesis. This reaction introduces a second double bond into the aromatic ring system. This is Chorismate synthase from Yersinia pseudotuberculosis serotype O:1b (strain IP 31758).